The primary structure comprises 350 residues: Protein OPG097 (350 aa).

The span at 1-10 shows a compositional bias: polar residues; that stretch reads MNTRTDVTND. Residues 1–61 are disordered; the sequence is MNTRTDVTND…QPPKQDNKCR (61 aa). Residues 11–43 are compositionally biased toward basic and acidic residues; it reads NIDKNPTKRGDRNIPGRNERFNDQNRFNNDRPR.

Belongs to the orthopoxvirus OPG097 family.

It is found in the virion. The protein resides in the host cytoplasm. Might be required to be present in the virion for transcription of early genes after primo infection. This chain is Protein OPG097 (OPG097), found in Homo sapiens (Human).